Here is a 122-residue protein sequence, read N- to C-terminus: Large ribosomal subunit protein uL18 (122 aa).

The protein belongs to the universal ribosomal protein uL18 family. In terms of assembly, part of the 50S ribosomal subunit; part of the 5S rRNA/L5/L18/L25 subcomplex. Contacts the 5S and 23S rRNAs.

Its function is as follows. This is one of the proteins that bind and probably mediate the attachment of the 5S RNA into the large ribosomal subunit, where it forms part of the central protuberance. The chain is Large ribosomal subunit protein uL18 from Prochlorococcus marinus (strain MIT 9515).